Here is a 530-residue protein sequence, read N- to C-terminus: Glutamate--cysteine ligase (530 aa).

This sequence belongs to the glutamate--cysteine ligase type 1 family. Type 1 subfamily.

The enzyme catalyses L-cysteine + L-glutamate + ATP = gamma-L-glutamyl-L-cysteine + ADP + phosphate + H(+). It participates in sulfur metabolism; glutathione biosynthesis; glutathione from L-cysteine and L-glutamate: step 1/2. The chain is Glutamate--cysteine ligase from Saccharophagus degradans (strain 2-40 / ATCC 43961 / DSM 17024).